The primary structure comprises 263 residues: Proteasome subunit alpha type-1 (263 aa).

Residue methionine 1 is modified to N-acetylmethionine. Residue serine 110 is modified to Phosphoserine; alternate. The O-linked (GlcNAc) serine; alternate glycan is linked to serine 110. Lysine 115 is covalently cross-linked (Glycyl lysine isopeptide (Lys-Gly) (interchain with G-Cter in ubiquitin)). A Phosphoserine modification is found at serine 177. Lysine 208 participates in a covalent cross-link: Glycyl lysine isopeptide (Lys-Gly) (interchain with G-Cter in ubiquitin). Residues 232 to 263 form a disordered region; the sequence is FLEGLEERPQRKAQPTQPADEPAEKADEPMEH. Residues 253-263 show a composition bias toward basic and acidic residues; sequence PAEKADEPMEH.

It belongs to the peptidase T1A family. As to quaternary structure, the 26S proteasome consists of a 20S proteasome core and two 19S regulatory subunits. The 20S proteasome core is a barrel-shaped complex made of 28 subunits that are arranged in four stacked rings. The two outer rings are each formed by seven alpha subunits, and the two inner rings are formed by seven beta subunits. The proteolytic activity is exerted by three beta-subunits PSMB5, PSMB6 and PSMB7. Interacts with NOTCH3. Interacts with ZFAND1.

It is found in the cytoplasm. The protein localises to the nucleus. In terms of biological role, component of the 20S core proteasome complex involved in the proteolytic degradation of most intracellular proteins. This complex plays numerous essential roles within the cell by associating with different regulatory particles. Associated with two 19S regulatory particles, forms the 26S proteasome and thus participates in the ATP-dependent degradation of ubiquitinated proteins. The 26S proteasome plays a key role in the maintenance of protein homeostasis by removing misfolded or damaged proteins that could impair cellular functions, and by removing proteins whose functions are no longer required. Associated with the PA200 or PA28, the 20S proteasome mediates ubiquitin-independent protein degradation. This type of proteolysis is required in several pathways including spermatogenesis (20S-PA200 complex) or generation of a subset of MHC class I-presented antigenic peptides (20S-PA28 complex). The chain is Proteasome subunit alpha type-1 (PSMA1) from Bos taurus (Bovine).